The primary structure comprises 429 residues: Bifunctional protein GlmU (429 aa).

The interval 1–223 (MKISVLILAA…EQDFMGVNDK (223 aa)) is pyrophosphorylase. UDP-N-acetyl-alpha-D-glucosamine is bound by residues 8-11 (LAAG), Lys-22, Gln-74, and 81-82 (GT). Mg(2+) is bound at residue Asp-102. Residues Gly-135, Glu-149, Asn-164, and Asn-221 each coordinate UDP-N-acetyl-alpha-D-glucosamine. Residue Asn-221 participates in Mg(2+) binding. Residues 224–244 (IELCLAQDLMQEAIKKEWMKQ) are linker. The tract at residues 245 to 429 (GVIFHMPATT…KDYFYTKFKK (185 aa)) is N-acetyltransferase. The UDP-N-acetyl-alpha-D-glucosamine site is built by Arg-308 and Lys-325. His-336 functions as the Proton acceptor in the catalytic mechanism. Residues Tyr-339 and Asn-350 each coordinate UDP-N-acetyl-alpha-D-glucosamine. Acetyl-CoA contacts are provided by residues 359 to 360 (NY), Ser-378, Ala-396, and Arg-413.

This sequence in the N-terminal section; belongs to the N-acetylglucosamine-1-phosphate uridyltransferase family. In the C-terminal section; belongs to the transferase hexapeptide repeat family. Homotrimer. Mg(2+) serves as cofactor.

Its subcellular location is the cytoplasm. It carries out the reaction alpha-D-glucosamine 1-phosphate + acetyl-CoA = N-acetyl-alpha-D-glucosamine 1-phosphate + CoA + H(+). The catalysed reaction is N-acetyl-alpha-D-glucosamine 1-phosphate + UTP + H(+) = UDP-N-acetyl-alpha-D-glucosamine + diphosphate. It functions in the pathway nucleotide-sugar biosynthesis; UDP-N-acetyl-alpha-D-glucosamine biosynthesis; N-acetyl-alpha-D-glucosamine 1-phosphate from alpha-D-glucosamine 6-phosphate (route II): step 2/2. It participates in nucleotide-sugar biosynthesis; UDP-N-acetyl-alpha-D-glucosamine biosynthesis; UDP-N-acetyl-alpha-D-glucosamine from N-acetyl-alpha-D-glucosamine 1-phosphate: step 1/1. Its pathway is bacterial outer membrane biogenesis; LPS lipid A biosynthesis. Functionally, catalyzes the last two sequential reactions in the de novo biosynthetic pathway for UDP-N-acetylglucosamine (UDP-GlcNAc). The C-terminal domain catalyzes the transfer of acetyl group from acetyl coenzyme A to glucosamine-1-phosphate (GlcN-1-P) to produce N-acetylglucosamine-1-phosphate (GlcNAc-1-P), which is converted into UDP-GlcNAc by the transfer of uridine 5-monophosphate (from uridine 5-triphosphate), a reaction catalyzed by the N-terminal domain. This chain is Bifunctional protein GlmU, found in Campylobacter lari (strain RM2100 / D67 / ATCC BAA-1060).